The primary structure comprises 101 residues: Small ribosomal subunit protein uS14 (101 aa).

Belongs to the universal ribosomal protein uS14 family. In terms of assembly, part of the 30S ribosomal subunit. Contacts proteins S3 and S10.

Its function is as follows. Binds 16S rRNA, required for the assembly of 30S particles and may also be responsible for determining the conformation of the 16S rRNA at the A site. The sequence is that of Small ribosomal subunit protein uS14 from Actinobacillus pleuropneumoniae serotype 3 (strain JL03).